Reading from the N-terminus, the 972-residue chain is FHF complex subunit HOOK-interacting protein 1B (972 aa).

4 disordered regions span residues 465 to 496 (APSPPRPEHASWARGPGSPSVDSSSVMTVPRP), 510 to 547 (SLSGSESPGPAPCSPGLSASPASSPGRRPTPAEEAGEL), 573 to 642 (SAPY…PGSW), and 710 to 733 (SFTCPPEPPGPFLNSPLRTPNQLP). A Phosphoserine modification is found at Ser-467. The segment covering 479-490 (GPGSPSVDSSSV) has biased composition (low complexity). Phosphoserine is present on residues Ser-510, Ser-523, Ser-529, and Ser-533. Residues 523–535 (SPGLSASPASSPG) are compositionally biased toward low complexity. Over residues 618–627 (GLAGGAGEGP) the composition is skewed to gly residues. Phosphoserine occurs at positions 859 and 897.

This sequence belongs to the FHIP family. In terms of assembly, component of the FTS/Hook/FHIP complex (FHF complex), composed of AKTIP/FTS, FHIP1B, and one or more members of the Hook family of proteins HOOK1, HOOK2, and HOOK3. The FHF complex associates with the homotypic vesicular sorting complex (the HOPS complex).

Functionally, component of the FTS/Hook/FHIP complex (FHF complex). The FHF complex may function to promote vesicle trafficking and/or fusion via the homotypic vesicular protein sorting complex (the HOPS complex). FHF complex promotes the distribution of AP-4 complex to the perinuclear area of the cell. The protein is FHF complex subunit HOOK-interacting protein 1B (FHIP1B) of Pongo abelii (Sumatran orangutan).